Reading from the N-terminus, the 320-residue chain is Ferrochelatase (320 aa).

Residues histidine 194 and glutamate 275 each coordinate Fe cation.

Belongs to the ferrochelatase family. As to quaternary structure, monomer.

The protein localises to the cytoplasm. It catalyses the reaction heme b + 2 H(+) = protoporphyrin IX + Fe(2+). Its pathway is porphyrin-containing compound metabolism; protoheme biosynthesis; protoheme from protoporphyrin-IX: step 1/1. Catalyzes the ferrous insertion into protoporphyrin IX. The protein is Ferrochelatase of Escherichia coli O127:H6 (strain E2348/69 / EPEC).